Here is a 112-residue protein sequence, read N- to C-terminus: Putative pterin-4-alpha-carbinolamine dehydratase (112 aa).

It belongs to the pterin-4-alpha-carbinolamine dehydratase family.

It catalyses the reaction (4aS,6R)-4a-hydroxy-L-erythro-5,6,7,8-tetrahydrobiopterin = (6R)-L-erythro-6,7-dihydrobiopterin + H2O. In Shewanella sp. (strain MR-7), this protein is Putative pterin-4-alpha-carbinolamine dehydratase.